We begin with the raw amino-acid sequence, 173 residues long: Dual-action ribosomal maturation protein DarP (173 aa).

Belongs to the DarP family.

It localises to the cytoplasm. Its function is as follows. Member of a network of 50S ribosomal subunit biogenesis factors which assembles along the 30S-50S interface, preventing incorrect 23S rRNA structures from forming. Promotes peptidyl transferase center (PTC) maturation. This Pseudomonas syringae pv. tomato (strain ATCC BAA-871 / DC3000) protein is Dual-action ribosomal maturation protein DarP.